The chain runs to 293 residues: 4-hydroxy-tetrahydrodipicolinate synthase (293 aa).

A pyruvate-binding site is contributed by Thr45. Tyr133 acts as the Proton donor/acceptor in catalysis. Residue Lys162 is the Schiff-base intermediate with substrate of the active site. Residue Ile204 participates in pyruvate binding.

Belongs to the DapA family. Homotetramer; dimer of dimers.

The protein localises to the cytoplasm. It catalyses the reaction L-aspartate 4-semialdehyde + pyruvate = (2S,4S)-4-hydroxy-2,3,4,5-tetrahydrodipicolinate + H2O + H(+). The protein operates within amino-acid biosynthesis; L-lysine biosynthesis via DAP pathway; (S)-tetrahydrodipicolinate from L-aspartate: step 3/4. In terms of biological role, catalyzes the condensation of (S)-aspartate-beta-semialdehyde [(S)-ASA] and pyruvate to 4-hydroxy-tetrahydrodipicolinate (HTPA). This Mesorhizobium japonicum (strain LMG 29417 / CECT 9101 / MAFF 303099) (Mesorhizobium loti (strain MAFF 303099)) protein is 4-hydroxy-tetrahydrodipicolinate synthase.